Reading from the N-terminus, the 449-residue chain is GTPase Der (449 aa).

EngA-type G domains follow at residues 4-174 and 183-358; these read PIVA…PPKT and LRVA…AQRQ. GTP-binding positions include 10-17, 57-61, 126-129, 189-196, 236-240, and 301-304; these read GRPNVGKS, DTAGL, NKCD, DTAGI, and NKWD. One can recognise a KH-like domain in the interval 359–444; it reads KRIPTSELNN…PIVIVFRSRE (86 aa).

It belongs to the TRAFAC class TrmE-Era-EngA-EngB-Septin-like GTPase superfamily. EngA (Der) GTPase family. In terms of assembly, associates with the 50S ribosomal subunit.

In terms of biological role, GTPase that plays an essential role in the late steps of ribosome biogenesis. This Chloroflexus aggregans (strain MD-66 / DSM 9485) protein is GTPase Der.